A 468-amino-acid chain; its full sequence is Dimethylamine methyltransferase MtbB2 (468 aa).

A non-standard amino acid (pyrrolysine) is located at residue pyrrolysine 356.

Belongs to the dimethylamine methyltransferase family.

The enzyme catalyses Co(I)-[dimethylamine-specific corrinoid protein] + dimethylamine + H(+) = methyl-Co(III)-[dimethylamine-specific corrinoid protein] + methylamine. Its pathway is one-carbon metabolism; methanogenesis from dimethylamine. Its function is as follows. Catalyzes the transfer of a methyl group from dimethylamine to the corrinoid cofactor of MtbC. The polypeptide is Dimethylamine methyltransferase MtbB2 (mtbB2) (Methanosarcina acetivorans (strain ATCC 35395 / DSM 2834 / JCM 12185 / C2A)).